A 331-amino-acid polypeptide reads, in one-letter code: Very-long-chain 3-oxoacyl-CoA reductase (331 aa).

A helical membrane pass occupies residues 15–35 (VQWALAGVGALYISAKVLSYL). Residues V60, D115, D123, N142, Y209, K213, I242, and S244 each coordinate NADP(+). Y209 functions as the Proton donor in the catalytic mechanism. Catalysis depends on K213, which acts as the Lowers pKa of active site Tyr.

The protein belongs to the short-chain dehydrogenases/reductases (SDR) family.

Its subcellular location is the endoplasmic reticulum membrane. It catalyses the reaction a very-long-chain (3R)-3-hydroxyacyl-CoA + NADP(+) = a very-long-chain 3-oxoacyl-CoA + NADPH + H(+). Its pathway is lipid metabolism; fatty acid biosynthesis. In terms of biological role, component of the microsomal membrane bound fatty acid elongation system, which produces the 26-carbon very long-chain fatty acids (VLCFA) from palmitate. Catalyzes the reduction of the 3-ketoacyl-CoA intermediate that is formed in each cycle of fatty acid elongation. VLCFAs serve as precursors for ceramide and sphingolipids. The polypeptide is Very-long-chain 3-oxoacyl-CoA reductase (Pyricularia oryzae (strain 70-15 / ATCC MYA-4617 / FGSC 8958) (Rice blast fungus)).